A 236-amino-acid chain; its full sequence is Thiamine import ATP-binding protein ThiQ (236 aa).

The ABC transporter domain occupies 2–230 (LKLEKITYLY…SAAKASVLGI (229 aa)). 32–39 (GPSGAGKS) contacts ATP.

It belongs to the ABC transporter superfamily. Thiamine importer (TC 3.A.1.19.1) family. The complex is composed of two ATP-binding proteins (ThiQ), two transmembrane proteins (ThiP) and a solute-binding protein (ThiB).

The protein localises to the cell inner membrane. It catalyses the reaction thiamine(out) + ATP + H2O = thiamine(in) + ADP + phosphate + H(+). Its function is as follows. Part of the ABC transporter complex ThiBPQ involved in thiamine import. Responsible for energy coupling to the transport system. This Yersinia pseudotuberculosis serotype I (strain IP32953) protein is Thiamine import ATP-binding protein ThiQ.